An 897-amino-acid chain; its full sequence is Leucine--tRNA ligase (897 aa).

Positions 49-59 match the 'HIGH' region motif; that stretch reads PYPSGKLHMGH. The 'KMSKS' region signature appears at 654–658; it reads KMSKS. Lys-657 provides a ligand contact to ATP.

This sequence belongs to the class-I aminoacyl-tRNA synthetase family.

The protein localises to the cytoplasm. It catalyses the reaction tRNA(Leu) + L-leucine + ATP = L-leucyl-tRNA(Leu) + AMP + diphosphate. In Methylibium petroleiphilum (strain ATCC BAA-1232 / LMG 22953 / PM1), this protein is Leucine--tRNA ligase.